Here is a 196-residue protein sequence, read N- to C-terminus: Flagellar transcriptional regulator FlhC (196 aa).

The Zn(2+) site is built by C138, C141, C158, and C161.

This sequence belongs to the FlhC family. In terms of assembly, heterohexamer composed of two FlhC and four FlhD subunits. Each FlhC binds a FlhD dimer, forming a heterotrimer, and a hexamer assembles by dimerization of two heterotrimers. It depends on Zn(2+) as a cofactor.

Its subcellular location is the cytoplasm. In terms of biological role, functions in complex with FlhD as a master transcriptional regulator that regulates transcription of several flagellar and non-flagellar operons by binding to their promoter region. Activates expression of class 2 flagellar genes, including fliA, which is a flagellum-specific sigma factor that turns on the class 3 genes. Also regulates genes whose products function in a variety of physiological pathways. This Sodalis glossinidius (strain morsitans) protein is Flagellar transcriptional regulator FlhC.